The following is a 327-amino-acid chain: E3 ubiquitin ligase Rnf121 (327 aa).

Residue alanine 2 is modified to N-acetylalanine. The next 5 helical transmembrane spans lie at 50-70 (MHAE…LLLV), 79-99 (SYNM…TVKL), 100-120 (HWWR…FVTF), 148-168 (ATGI…NLLF), and 172-192 (PEDA…YGVL). An RING-type; atypical zinc finger spans residues 226 to 276 (CAVCGQQIFVDVNEEGIIENTYRLSCNHVFHEFCIRGWCIVGKKQTCPYCK). The helical transmembrane segment at 306–326 (LVAWQPVIIGLVQGISYILGL) threads the bilayer.

It belongs to the RNF121 family.

Its subcellular location is the endoplasmic reticulum membrane. The enzyme catalyses S-ubiquitinyl-[E2 ubiquitin-conjugating enzyme]-L-cysteine + [acceptor protein]-L-lysine = [E2 ubiquitin-conjugating enzyme]-L-cysteine + N(6)-ubiquitinyl-[acceptor protein]-L-lysine.. It participates in protein modification; protein ubiquitination. Its function is as follows. E3 ubiquitin ligase which accepts ubiquitin and transfers it to substrates thereby promoting their degradation by the endoplasmic reticulum-associated degradation (ERAD) pathway which is a pathway involved in ubiquitin-dependent degradation of misfolded endoplasmic reticulum proteins. May regulate the unfolded protein response to reduce endoplasmic reticulum stress. The chain is E3 ubiquitin ligase Rnf121 (Rnf121) from Mus musculus (Mouse).